Here is a 336-residue protein sequence, read N- to C-terminus: DNA repair protein RAD51 homolog B (336 aa).

One can recognise a HhH domain in the interval 45–74; it reads TVEAVAYAPKKELLNIKGISEAKAEKILAE. Residue 124-131 coordinates ATP; sequence GEFRTGKT. The Nuclear export signal signature appears at 242-257; it reads LARFLRMLLRLADEFG.

This sequence belongs to the RecA family. RAD51 subfamily. Forms linear homooligomers, giving rise to a RAD51 nucleoprotein filament, which is essential for strand-pairing reactions during DNA recombination.

The protein resides in the nucleus. It is found in the cytoplasm. Its subcellular location is the chromosome. Functionally, plays an important role in homologous strand exchange, a key step in DNA repair through homologous recombination (HR). Binds to single-stranded DNA in an ATP-dependent manner to form nucleoprotein filaments which are essential for the homology search and strand exchange. Catalyzes the recognition of homology and strand exchange between homologous DNA partners to form a joint molecule between a processed DNA break and the repair template. Recruited to resolve stalled replication forks during replication stress. Also involved in interstrand cross-link repair. This Xenopus laevis (African clawed frog) protein is DNA repair protein RAD51 homolog B (rad51-b).